The following is a 175-amino-acid chain: MKPDPRSTHFNAAGEVHMVDVTGKDITVREAVASARIHMSADAAEAIRRGDTKKGDVLAVARLAGIAGAKWTSHLIPLCHAIPIEAVSIDFDWVDESDSDDDAVANQTLRCTATARTTAKTGIEMESLTAASTAALTVYDMLKSVDRAMVIDQVRLESKSGGKSGDFRRDTGDKA.

Residues 78 to 80 and 125 to 126 each bind substrate; these read LCH and ME. Residue D140 is part of the active site.

This sequence belongs to the MoaC family. In terms of assembly, homohexamer; trimer of dimers.

The enzyme catalyses (8S)-3',8-cyclo-7,8-dihydroguanosine 5'-triphosphate = cyclic pyranopterin phosphate + diphosphate. It participates in cofactor biosynthesis; molybdopterin biosynthesis. Catalyzes the conversion of (8S)-3',8-cyclo-7,8-dihydroguanosine 5'-triphosphate to cyclic pyranopterin monophosphate (cPMP). The protein is Cyclic pyranopterin monophosphate synthase of Rhodopirellula baltica (strain DSM 10527 / NCIMB 13988 / SH1).